A 192-amino-acid polypeptide reads, in one-letter code: Protein FAM210B, mitochondrial (192 aa).

A mitochondrion-targeting transit peptide spans 1–58 (MAGLLALLGPAGRVGARVRPRATWLLGATAPCAPPPLALALLPPRLDARLLRTARGDC). Positions 57–80 (DCRGHQDPSQATGTTGSSVSCTEE) are disordered. Residues 63–77 (DPSQATGTTGSSVSC) are compositionally biased toward polar residues. The DUF1279 domain occupies 80–191 (EKKQSKSQQL…VGFFKPPAAK (112 aa)). A run of 2 helical transmembrane segments spans residues 99–119 (VGVS…YMVV) and 150–170 (FVVA…ITLV).

Belongs to the FAM210 family. In terms of tissue distribution, expressed in late erythroblast differentiation stages. Underexpressed in ovarian cancer epithelia cells compared with normal human ovarian surface epithelia.

Its subcellular location is the mitochondrion. The protein resides in the mitochondrion outer membrane. Functionally, plays a role in erythroid differentiation. Involved in cell proliferation and tumor cell growth suppression. Involved in the metabolic reprogramming of cancer cells in a PDK4-dependent manner. The protein is Protein FAM210B, mitochondrial of Homo sapiens (Human).